A 198-amino-acid polypeptide reads, in one-letter code: Imidazoleglycerol-phosphate dehydratase (198 aa).

The protein belongs to the imidazoleglycerol-phosphate dehydratase family.

It is found in the cytoplasm. The catalysed reaction is D-erythro-1-(imidazol-4-yl)glycerol 3-phosphate = 3-(imidazol-4-yl)-2-oxopropyl phosphate + H2O. The protein operates within amino-acid biosynthesis; L-histidine biosynthesis; L-histidine from 5-phospho-alpha-D-ribose 1-diphosphate: step 6/9. The protein is Imidazoleglycerol-phosphate dehydratase of Streptomyces griseus subsp. griseus (strain JCM 4626 / CBS 651.72 / NBRC 13350 / KCC S-0626 / ISP 5235).